We begin with the raw amino-acid sequence, 93 residues long: Alpha-defensin 21 (93 aa).

The first 19 residues, 1 to 19, serve as a signal peptide directing secretion; that stretch reads MKTLVLLSALILLAYQVQT. The propeptide occupies 20–58; the sequence is DPIQNTDEETNTEEQPGEDDQAVSVSFGGQEGSALHEKL. The disordered stretch occupies residues 22-43; it reads IQNTDEETNTEEQPGEDDQAVS. Residues 25-40 show a composition bias toward acidic residues; that stretch reads TDEETNTEEQPGEDDQ. 3 disulfides stabilise this stretch: Cys64/Cys89, Cys66/Cys81, and Cys71/Cys88.

The protein belongs to the alpha-defensin family.

The protein localises to the secreted. May have microbicidal activities. This chain is Alpha-defensin 21 (Defa21), found in Mus musculus (Mouse).